Here is a 358-residue protein sequence, read N- to C-terminus: Isopentenyl-diphosphate delta-isomerase (358 aa).

12–13 (RK) lines the substrate pocket. FMN-binding positions include 69-71 (AMT), serine 99, and asparagine 128. Glutamine 158 provides a ligand contact to substrate. Glutamate 159 contributes to the Mg(2+) binding site. FMN is bound by residues lysine 190, threonine 220, 267 to 269 (GIR), and 288 to 289 (AG).

The protein belongs to the IPP isomerase type 2 family. In terms of assembly, homooctamer. Dimer of tetramers. FMN is required as a cofactor. Requires NADPH as cofactor. Mg(2+) serves as cofactor.

Its subcellular location is the cytoplasm. It catalyses the reaction isopentenyl diphosphate = dimethylallyl diphosphate. Functionally, involved in the biosynthesis of isoprenoids. Catalyzes the 1,3-allylic rearrangement of the homoallylic substrate isopentenyl (IPP) to its allylic isomer, dimethylallyl diphosphate (DMAPP). The protein is Isopentenyl-diphosphate delta-isomerase of Listeria monocytogenes serovar 1/2a (strain ATCC BAA-679 / EGD-e).